Reading from the N-terminus, the 142-residue chain is Large ribosomal subunit protein mL42 (142 aa).

The N-terminal 31 residues, 1–31, are a transit peptide targeting the mitochondrion; that stretch reads MAAAVKWAISNRTIWKHLLPIQNGALSSACH.

This sequence belongs to the mitochondrion-specific ribosomal protein mL42 family. In terms of assembly, component of the mitochondrial ribosome large subunit (39S) which comprises a 16S rRNA and about 50 distinct proteins. Component of the mitochondrial ribosome small subunit (28S) which comprises a 12S rRNA and about 30 distinct proteins.

Its subcellular location is the mitochondrion. In Mus musculus (Mouse), this protein is Large ribosomal subunit protein mL42 (Mrpl42).